Here is a 591-residue protein sequence, read N- to C-terminus: Homeobox domain-containing transcription factor HOB1 (591 aa).

Basic and acidic residues predominate over residues 1-15; the sequence is MEGKNEDMHTPRGPE. Disordered regions lie at residues 1 to 37 and 148 to 168; these read MEGK…DMLG and IAGP…RSPA. Positions 176 to 223 form a DNA-binding region, homeobox; the sequence is IAILRESYARNPNPDRKELERLAARTGRPWNKIREYFRQRRNKLRGLE. Disordered regions lie at residues 420 to 463 and 543 to 563; these read DAGL…PRES and DAIE…ALTE. Acidic residues predominate over residues 427 to 441; sequence QGEEDQPPTVEESDQ. Basic and acidic residues predominate over residues 543–560; sequence DAIERRNAGESKRKRDDA.

It localises to the nucleus. In terms of biological role, general stress-responsive transcription factor that governs multiple stress responses and adaptations. Plays a key role in virulence. Mediates the expression of LAC1, which is the major laccase involved in melanin synthesis. Positively regulates BZP4 induction under conditions of nutrient starvation and basal expression levels of MBS1 and USV101, 3 major transcription factors that independently contribute to melanin production. Also acts as a key regulator of ergosterol gene expression. This Cryptococcus neoformans var. grubii serotype A (strain H99 / ATCC 208821 / CBS 10515 / FGSC 9487) (Filobasidiella neoformans var. grubii) protein is Homeobox domain-containing transcription factor HOB1.